The primary structure comprises 913 residues: Cadherin-4 (913 aa).

The first 19 residues, 1–19 (MRTGSRLLLVLLVWGSAAA), serve as a signal peptide directing secretion. Residues 20 to 166 (LNGDLTVRPT…SAKGLRRQKR (147 aa)) constitute a propeptide that is removed on maturation. Cadherin domains are found at residues 167-274 (DWVI…RPEF), 275-389 (INQV…PPEF), 390-504 (TTST…APYF), 505-610 (PTNH…DNAP), and 611-721 (ELLP…TIGA). Residues 167–731 (DWVIPPINVP…VAAAGLGTGA (565 aa)) lie on the Extracellular side of the membrane. Asn-280, Asn-409, Asn-554, Asn-629, Asn-658, and Asn-699 each carry an N-linked (GlcNAc...) asparagine glycan. A helical membrane pass occupies residues 732–753 (IIAILICIIILLTMVLLFVVWM). The Cytoplasmic segment spans residues 754–913 (KRREKERHTK…ADMYGGGEED (160 aa)).

In terms of tissue distribution, embryonic brain and neuronal retina.

Its subcellular location is the cell membrane. Cadherins are calcium-dependent cell adhesion proteins. They preferentially interact with themselves in a homophilic manner in connecting cells; cadherins may thus contribute to the sorting of heterogeneous cell types. May play an important role in retinal development. In Gallus gallus (Chicken), this protein is Cadherin-4 (CDH4).